The sequence spans 149 residues: Putative sugar phosphate isomerase YwlF (149 aa).

H9 contributes to the substrate binding site. C66 acts as the Proton acceptor in catalysis. 67 to 72 (GTGIGM) serves as a coordination point for substrate. Residue H99 is the Proton donor of the active site. R133 is a substrate binding site.

The protein belongs to the LacAB/RpiB family.

In Bacillus subtilis (strain 168), this protein is Putative sugar phosphate isomerase YwlF (ywlF).